Reading from the N-terminus, the 203-residue chain is Dephospho-CoA kinase (203 aa).

Positions 3–201 constitute a DPCK domain; it reads SVGLTGGIGS…QRYLGYAAAA (199 aa). 11–16 contributes to the ATP binding site; sequence GSGKTT.

It belongs to the CoaE family.

It localises to the cytoplasm. The enzyme catalyses 3'-dephospho-CoA + ATP = ADP + CoA + H(+). The protein operates within cofactor biosynthesis; coenzyme A biosynthesis; CoA from (R)-pantothenate: step 5/5. In terms of biological role, catalyzes the phosphorylation of the 3'-hydroxyl group of dephosphocoenzyme A to form coenzyme A. This Burkholderia thailandensis (strain ATCC 700388 / DSM 13276 / CCUG 48851 / CIP 106301 / E264) protein is Dephospho-CoA kinase.